The sequence spans 149 residues: METQTSFINDGPKIHSNKLNQLDFLSGNNNNNRDNYYNNKNDKNSITHFNNYNYSGHSSYDNESARLIPISGNFKNESINKQRRKVVIARIFILLCLLICLGLALMGLFHYLITNDKRLDSISILFWSGSAFLIIVLIICLLARHCGSD.

2 helical membrane-spanning segments follow: residues I91–Y111 and I122–L142.

The protein resides in the membrane. This is an uncharacterized protein from Dictyostelium discoideum (Social amoeba).